The primary structure comprises 136 residues: Protein LpdD (136 aa).

This sequence belongs to the CinA family.

Functionally, probably involved in tannin degradation, however the precise biochemical function in metabolism of gallate is unknown. This Lactiplantibacillus plantarum (strain ATCC BAA-793 / NCIMB 8826 / WCFS1) (Lactobacillus plantarum) protein is Protein LpdD.